Consider the following 216-residue polypeptide: MAPGSWFSPLLIAVVTLGLPQGAAATFPTMPLSNLFTNAVLRAQHLHLLAAETYKEFERTYIPEDQRYTNKNSQAAFCYSETIPAPTGKDDAQQKSDMELLRFSLVLIQSWLTPMQYLSKVFTNNLVFGTSDRVFEKLKDLEEGIQALMRELEDRSPRGPQLLRPTYDRFDIHLRSEDALLKNYGLLSCFKKDLHKVETYLKVMKCRRFGESNCNI.

The signal sequence occupies residues Met1–Ala25. His45 contributes to the Zn(2+) binding site. A disulfide bridge connects residues Cys78 and Cys189. Glu198 is a binding site for Zn(2+). A disulfide bond links Cys206 and Cys214.

It belongs to the somatotropin/prolactin family. Pituitary gland.

Its subcellular location is the secreted. Growth hormone plays an important role in growth control. This chain is Somatotropin (GH), found in Meleagris gallopavo (Wild turkey).